A 309-amino-acid chain; its full sequence is Putative pyridoxal kinase C6F6.11c (309 aa).

Substrate-binding residues include Ser12 and Tyr123. ATP contacts are provided by residues 182–183 (SS) and 209–221 (LIPV…RGTG). Asp222 provides a ligand contact to substrate.

This sequence belongs to the pyridoxine kinase family. The cofactor is a divalent metal cation.

The protein resides in the cytoplasm. It localises to the nucleus. The catalysed reaction is pyridoxal + ATP = pyridoxal 5'-phosphate + ADP + H(+). Required for synthesis of pyridoxal-5-phosphate from vitamin B6. The polypeptide is Putative pyridoxal kinase C6F6.11c (Schizosaccharomyces pombe (strain 972 / ATCC 24843) (Fission yeast)).